Reading from the N-terminus, the 86-residue chain is Selenoprotein W (86 aa).

Residues 10-13 (CGGU) constitute a cross-link (cysteinyl-selenocysteine (Cys-Sec); redox-active). A non-standard amino acid (selenocysteine) is located at residue Sec-13.

It belongs to the SelWTH family. Selenoprotein W subfamily.

It localises to the cytoplasm. Functionally, plays a role as a glutathione (GSH)-dependent antioxidant. May be involved in a redox-related process. May play a role in the myopathies of selenium deficiency. The polypeptide is Selenoprotein W (Danio rerio (Zebrafish)).